The chain runs to 166 residues: Thioredoxin, mitochondrial (166 aa).

The transit peptide at methionine 1 to leucine 59 directs the protein to the mitochondrion. One can recognise a Thioredoxin domain in the interval threonine 61–glycine 166. Residues cysteine 90 and cysteine 93 each act as nucleophile in the active site. Cysteine 90 and cysteine 93 are oxidised to a cystine. Lysine 152 bears the N6-acetyllysine; alternate mark. Lysine 152 bears the N6-succinyllysine; alternate mark.

The protein belongs to the thioredoxin family. Monomer.

It is found in the mitochondrion. Functionally, important for the control of mitochondrial reactive oxygen species homeostasis, apoptosis regulation and cell viability. Is involved in various redox reactions including the reduction of protein disulfide bonds, through the reversible oxidation of its active center dithiol to a disulfide. This chain is Thioredoxin, mitochondrial (Txn2), found in Mus musculus (Mouse).